A 136-amino-acid polypeptide reads, in one-letter code: Small ribosomal subunit protein eS19 (136 aa).

K23 is subject to N6-acetyllysine. R67 carries the post-translational modification Omega-N-methylarginine. 2 positions are modified to N6-acetyllysine: K111 and K115. Residues 116–136 (DQDGGRKLTPQGQRDLDRIAG) are disordered.

Belongs to the eukaryotic ribosomal protein eS19 family. In terms of assembly, component of the small ribosomal subunit. Part of the small subunit (SSU) processome, composed of more than 70 proteins and the RNA chaperone small nucleolar RNA (snoRNA) U3. Interacts with RPS19BP1; the interaction is direct and mediates the integration of RPS19 in state post-A1. Interacts with RPS19BP1.

The protein resides in the cytoplasm. It is found in the nucleus. It localises to the nucleolus. Functionally, component of the small ribosomal subunit. The ribosome is a large ribonucleoprotein complex responsible for the synthesis of proteins in the cell. Required for pre-rRNA processing and maturation of 40S ribosomal subunits. Part of the small subunit (SSU) processome, first precursor of the small eukaryotic ribosomal subunit. During the assembly of the SSU processome in the nucleolus, many ribosome biogenesis factors, an RNA chaperone and ribosomal proteins associate with the nascent pre-rRNA and work in concert to generate RNA folding, modifications, rearrangements and cleavage as well as targeted degradation of pre-ribosomal RNA by the RNA exosome. This is Small ribosomal subunit protein eS19 (RPS19) from Sus scrofa (Pig).